The following is a 364-amino-acid chain: Aminomethyltransferase (364 aa).

The protein belongs to the GcvT family. In terms of assembly, the glycine cleavage system is composed of four proteins: P, T, L and H.

The catalysed reaction is N(6)-[(R)-S(8)-aminomethyldihydrolipoyl]-L-lysyl-[protein] + (6S)-5,6,7,8-tetrahydrofolate = N(6)-[(R)-dihydrolipoyl]-L-lysyl-[protein] + (6R)-5,10-methylene-5,6,7,8-tetrahydrofolate + NH4(+). In terms of biological role, the glycine cleavage system catalyzes the degradation of glycine. This Shewanella piezotolerans (strain WP3 / JCM 13877) protein is Aminomethyltransferase.